Here is a 272-residue protein sequence, read N- to C-terminus: Putative pyruvate, phosphate dikinase regulatory protein 1 (272 aa).

151–158 (GISRTSKT) contributes to the ADP binding site.

Belongs to the pyruvate, phosphate/water dikinase regulatory protein family. PDRP subfamily.

It catalyses the reaction N(tele)-phospho-L-histidyl/L-threonyl-[pyruvate, phosphate dikinase] + ADP = N(tele)-phospho-L-histidyl/O-phospho-L-threonyl-[pyruvate, phosphate dikinase] + AMP + H(+). It carries out the reaction N(tele)-phospho-L-histidyl/O-phospho-L-threonyl-[pyruvate, phosphate dikinase] + phosphate + H(+) = N(tele)-phospho-L-histidyl/L-threonyl-[pyruvate, phosphate dikinase] + diphosphate. In terms of biological role, bifunctional serine/threonine kinase and phosphorylase involved in the regulation of the pyruvate, phosphate dikinase (PPDK) by catalyzing its phosphorylation/dephosphorylation. This chain is Putative pyruvate, phosphate dikinase regulatory protein 1, found in Staphylococcus epidermidis (strain ATCC 35984 / DSM 28319 / BCRC 17069 / CCUG 31568 / BM 3577 / RP62A).